Reading from the N-terminus, the 294-residue chain is Beta-lactamase (294 aa).

The signal sequence occupies residues 1-27 (MFKKRGRQTVLIAAVLAFFTASSPLLA). The active-site Acyl-ester intermediate is Ser76. Residue Glu174 is the Proton acceptor of the active site. Residue 240–242 (KTG) coordinates substrate.

The protein belongs to the class-A beta-lactamase family.

The enzyme catalyses a beta-lactam + H2O = a substituted beta-amino acid. This chain is Beta-lactamase, found in Citrobacter koseri (Citrobacter diversus).